Consider the following 222-residue polypeptide: tRNA (guanine-N(1)-)-methyltransferase (222 aa).

Residues Gly110 and 130–135 (IGDYVL) each bind S-adenosyl-L-methionine.

It belongs to the RNA methyltransferase TrmD family. As to quaternary structure, homodimer.

The protein localises to the cytoplasm. The enzyme catalyses guanosine(37) in tRNA + S-adenosyl-L-methionine = N(1)-methylguanosine(37) in tRNA + S-adenosyl-L-homocysteine + H(+). Functionally, specifically methylates guanosine-37 in various tRNAs. This chain is tRNA (guanine-N(1)-)-methyltransferase, found in Protochlamydia amoebophila (strain UWE25).